We begin with the raw amino-acid sequence, 507 residues long: Maturase K (507 aa).

Belongs to the intron maturase 2 family. MatK subfamily.

Its subcellular location is the plastid. The protein resides in the chloroplast. Functionally, usually encoded in the trnK tRNA gene intron. Probably assists in splicing its own and other chloroplast group II introns. In Fagopyrum esculentum (Common buckwheat), this protein is Maturase K.